We begin with the raw amino-acid sequence, 284 residues long: Esterase alnB (284 aa).

Residues S93, D226, and H255 each act as charge relay system in the active site.

The protein belongs to the LovG family.

It functions in the pathway polyketide biosynthesis. Esterase; part of the gene cluster that mediates the biosynthesis of asperlin, a polyketide showing anti-inflammatory, antitumor and antibiotic activities. The first step of the asperlin biosynthesis is the production of the intermediate 2,4,6-octatrienoic acid by the highly redusing polyketide synthase alnA with cleavage of the PKS product by the esterase alnB. 2,4,6-octatrienoic acid is further converted to asperlin via several steps involving the remaining enzymes from the cluster. The sequence is that of Esterase alnB from Emericella nidulans (strain FGSC A4 / ATCC 38163 / CBS 112.46 / NRRL 194 / M139) (Aspergillus nidulans).